A 209-amino-acid chain; its full sequence is ATP-dependent Clp protease proteolytic subunit 2 (209 aa).

Serine 107 (nucleophile) is an active-site residue. The active site involves histidine 132.

Belongs to the peptidase S14 family. Fourteen ClpP subunits assemble into 2 heptameric rings which stack back to back to give a disk-like structure with a central cavity, resembling the structure of eukaryotic proteasomes.

It localises to the cytoplasm. It carries out the reaction Hydrolysis of proteins to small peptides in the presence of ATP and magnesium. alpha-casein is the usual test substrate. In the absence of ATP, only oligopeptides shorter than five residues are hydrolyzed (such as succinyl-Leu-Tyr-|-NHMec, and Leu-Tyr-Leu-|-Tyr-Trp, in which cleavage of the -Tyr-|-Leu- and -Tyr-|-Trp bonds also occurs).. Functionally, cleaves peptides in various proteins in a process that requires ATP hydrolysis. Has a chymotrypsin-like activity. Plays a major role in the degradation of misfolded proteins. In Corynebacterium jeikeium (strain K411), this protein is ATP-dependent Clp protease proteolytic subunit 2.